The chain runs to 275 residues: Elongation factor Ts (275 aa).

The tract at residues 76–79 (TDFV) is involved in Mg(2+) ion dislocation from EF-Tu.

It belongs to the EF-Ts family.

The protein localises to the cytoplasm. Functionally, associates with the EF-Tu.GDP complex and induces the exchange of GDP to GTP. It remains bound to the aminoacyl-tRNA.EF-Tu.GTP complex up to the GTP hydrolysis stage on the ribosome. In Rhodococcus opacus (strain B4), this protein is Elongation factor Ts.